Consider the following 694-residue polypeptide: Elongation factor G (694 aa).

The region spanning 12–286 (SKLRNIGIMA…AVVDYLPSPI (275 aa)) is the tr-type G domain. GTP is bound by residues 21-28 (AHIDAGKT), 85-89 (DTPGH), and 139-142 (NKMD).

The protein belongs to the TRAFAC class translation factor GTPase superfamily. Classic translation factor GTPase family. EF-G/EF-2 subfamily.

The protein localises to the cytoplasm. Catalyzes the GTP-dependent ribosomal translocation step during translation elongation. During this step, the ribosome changes from the pre-translocational (PRE) to the post-translocational (POST) state as the newly formed A-site-bound peptidyl-tRNA and P-site-bound deacylated tRNA move to the P and E sites, respectively. Catalyzes the coordinated movement of the two tRNA molecules, the mRNA and conformational changes in the ribosome. The sequence is that of Elongation factor G from Pseudothermotoga lettingae (strain ATCC BAA-301 / DSM 14385 / NBRC 107922 / TMO) (Thermotoga lettingae).